We begin with the raw amino-acid sequence, 477 residues long: Cytochrome P450 monooxygenase poxC (477 aa).

A helical transmembrane segment spans residues 24-41; that stretch reads AWHFAVLSFVYVIARSIY. Cys-420 serves as a coordination point for heme.

The protein belongs to the cytochrome P450 family. Requires heme as cofactor.

The protein localises to the membrane. The protein operates within secondary metabolite biosynthesis. Functionally, cytochrome P450 monooxygenase; part of the gene cluster that mediates the biosynthesis of oxaleimides, cytotoxic compounds containing an unusual disubstituted succinimide moiety. The first step of the pathway is provided by the HR-PKS poxF that serves in a new mode of collaborative biosynthesis with the PKS-NRPS poxE, by providing the olefin containing amino acid substrate via the synthesis of an ACP-bound dec-4-enoate. The cytochrome P450 monooxygenase poxM-catalyzed oxidation at the alpha-position creates the enzyme-bound 2-hydroxydec-4-enoyl-ACP thioester, which may be prone to spontaneous hydrolysis to yield 2-hydroxydec-4-enoic acid due to increased electrophilicity of the carbonyl. 2-hydroxydec-4-enoic acid can then be further oxidized by poxM to yield the alpha-ketoacid 2-oxodec-4-enoicacid, which is reductively aminated by the aminotransferase poxL to yield (S,E)-2-aminodec-4-enoic acid. The Hybrid PKS-NRPS synthetase poxE then performs condensation between the octaketide product of its PKS modules and the amino group of (S,E)-2-aminodec-4-enoic acid which is activated and incorporated by the adenylation domain. The resulting aminoacyl product can be cyclized by the Diels-Alderase PoxQ and reductively released by the reductive (R) domain of poxE to yield an aldehyde intermediate. The released aldehyde is then substrate for a Knoevenagel condensation by the hydrolyase poxO followed by an oxidation at the 5-position of the pyrrolidone ring. The presence of the olefin from the amino acid building block allows for migration of the substituted allyl group to occur. This allylic transposition reaction takes place in a conjugate addition, semipinacol-like fashion to yield a succinimide intermediate. Iterative two-electron oxidations of the C7 methyl of the succinimide intermediate to the carboxylic acid can be catalyzed by one of two remaining cytochrome P450 monooxygenasess poxC or poxD to yield oxaleimide A. Subsequent oxidation yields the maleimide scaffold oxaleimide I. Both oxaleimide A and oxaleimide I can undergo oxidative modifications in the decalin ring to yield the series of products oxaleimides B to H. The protein is Cytochrome P450 monooxygenase poxC of Penicillium oxalicum (strain 114-2 / CGMCC 5302) (Penicillium decumbens).